The primary structure comprises 444 residues: MPTARCSMRASSTAPVRMMATAGGARIGAILRVTSGNFLEQFDFFLFGFYATYIAHTFFPASSEFASLMMTFAVFGAGFLMRPIGAIVLGAYIDKVGRRKGLIVTLSIMATGTFLIVLIPSYQTIGLWAPLLVLIGRLLQGFSAGAELGGVSVYLAEIATPGRKGFYTSWQSGSQQVAIMVAAAMGFALNAVLEPSAISDWGWRIPFLFGVLIVPFIFILRRKLEETQEFTARRHHLAMRQVFATLLANWQVVIAGMMMVAMTTTAFYLITVYAPTFGKKVLMLSASDSLLVTLLVAISNFFWLPVGGALSDRFGRRSVLIAMTLLALATAWPALTMLANAPSFLMMLSVLLWLSFIYGMYNGAMIPALTEIMPAEVRVAGFSLAYSLATAVFGGFTPVISTALIEYTGDKASPGYWMSFAAICGLLATCYLYRRSAVALQTAR.

Residues 1–41 (MPTARCSMRASSTAPVRMMATAGGARIGAILRVTSGNFLEQ) lie on the Cytoplasmic side of the membrane. Residues 42-62 (FDFFLFGFYATYIAHTFFPAS) traverse the membrane as a helical segment. The Periplasmic segment spans residues 63–72 (SEFASLMMTF). The chain crosses the membrane as a helical span at residues 73 to 93 (AVFGAGFLMRPIGAIVLGAYI). The Cytoplasmic portion of the chain corresponds to 94-114 (DKVGRRKGLIVTLSIMATGTF). The helical transmembrane segment at 115–135 (LIVLIPSYQTIGLWAPLLVLI) threads the bilayer. The Periplasmic segment spans residues 136-137 (GR). Residues 138–158 (LLQGFSAGAELGGVSVYLAEI) form a helical membrane-spanning segment. At 159 to 177 (ATPGRKGFYTSWQSGSQQV) the chain is on the cytoplasmic side. The helical transmembrane segment at 178–198 (AIMVAAAMGFALNAVLEPSAI) threads the bilayer. Position 199 (serine 199) is a topological domain, periplasmic. The chain crosses the membrane as a helical span at residues 200–220 (DWGWRIPFLFGVLIVPFIFIL). Residues 221-251 (RRKLEETQEFTARRHHLAMRQVFATLLANWQ) lie on the Cytoplasmic side of the membrane. A helical transmembrane segment spans residues 252–272 (VVIAGMMMVAMTTTAFYLITV). The Periplasmic segment spans residues 273-289 (YAPTFGKKVLMLSASDS). Residues 290–310 (LLVTLLVAISNFFWLPVGGAL) form a helical membrane-spanning segment. Residues 311–318 (SDRFGRRS) are Cytoplasmic-facing. The helical transmembrane segment at 319 to 339 (VLIAMTLLALATAWPALTMLA) threads the bilayer. Position 340 (asparagine 340) is a topological domain, periplasmic. The chain crosses the membrane as a helical span at residues 341–361 (APSFLMMLSVLLWLSFIYGMY). Topologically, residues 362–379 (NGAMIPALTEIMPAEVRV) are cytoplasmic. Residues 380–400 (AGFSLAYSLATAVFGGFTPVI) traverse the membrane as a helical segment. Topologically, residues 401 to 411 (STALIEYTGDK) are periplasmic. Residues 412 to 432 (ASPGYWMSFAAICGLLATCYL) traverse the membrane as a helical segment. Topologically, residues 433–444 (YRRSAVALQTAR) are cytoplasmic.

Belongs to the major facilitator superfamily. Metabolite:H+ Symporter (MHS) family (TC 2.A.1.6) family.

The protein localises to the cell inner membrane. In terms of biological role, uptake of citrate across the boundary membrane with the concomitant transport of protons into the cell (symport system). This chain is Citrate-proton symporter (citH), found in Klebsiella pneumoniae.